The primary structure comprises 298 residues: Homoserine kinase (298 aa).

ATP is bound at residue 92–102 (PLARGLGSSAT).

This sequence belongs to the GHMP kinase family. Homoserine kinase subfamily.

It is found in the cytoplasm. It catalyses the reaction L-homoserine + ATP = O-phospho-L-homoserine + ADP + H(+). Its pathway is amino-acid biosynthesis; L-threonine biosynthesis; L-threonine from L-aspartate: step 4/5. Its function is as follows. Catalyzes the ATP-dependent phosphorylation of L-homoserine to L-homoserine phosphate. The polypeptide is Homoserine kinase (thrB) (Nostoc sp. (strain PCC 7120 / SAG 25.82 / UTEX 2576)).